Reading from the N-terminus, the 477-residue chain is Aspartyl/glutamyl-tRNA(Asn/Gln) amidotransferase subunit B (477 aa).

Belongs to the GatB/GatE family. GatB subfamily. In terms of assembly, heterotrimer of A, B and C subunits.

The catalysed reaction is L-glutamyl-tRNA(Gln) + L-glutamine + ATP + H2O = L-glutaminyl-tRNA(Gln) + L-glutamate + ADP + phosphate + H(+). It carries out the reaction L-aspartyl-tRNA(Asn) + L-glutamine + ATP + H2O = L-asparaginyl-tRNA(Asn) + L-glutamate + ADP + phosphate + 2 H(+). Allows the formation of correctly charged Asn-tRNA(Asn) or Gln-tRNA(Gln) through the transamidation of misacylated Asp-tRNA(Asn) or Glu-tRNA(Gln) in organisms which lack either or both of asparaginyl-tRNA or glutaminyl-tRNA synthetases. The reaction takes place in the presence of glutamine and ATP through an activated phospho-Asp-tRNA(Asn) or phospho-Glu-tRNA(Gln). The chain is Aspartyl/glutamyl-tRNA(Asn/Gln) amidotransferase subunit B from Legionella pneumophila (strain Lens).